Reading from the N-terminus, the 386-residue chain is O-methyltransferase 10 (386 aa).

S-adenosyl-L-homocysteine-binding residues include S207, G231, D254, D274, and K288. D254 contributes to the S-adenosyl-L-methionine binding site. Residue H292 is the Proton acceptor of the active site.

The protein belongs to the class I-like SAM-binding methyltransferase superfamily. Cation-independent O-methyltransferase family. As to quaternary structure, homodimer.

It carries out the reaction dopamine + S-adenosyl-L-methionine = 4-methoxytyramine + S-adenosyl-L-homocysteine + H(+). The enzyme catalyses 3,4-dihydroxy-5-methoxyphenethylamine + S-adenosyl-L-methionine = 3-hydroxy-4,5-dimethoxyphenethylamine + S-adenosyl-L-homocysteine + H(+). It catalyses the reaction 3-hydroxy-4,5-dimethoxyphenethylamine + S-adenosyl-L-methionine = mescaline + S-adenosyl-L-homocysteine + H(+). The catalysed reaction is 4-hydroxy-3,5-dimethoxyphenethylamine + S-adenosyl-L-methionine = mescaline + S-adenosyl-L-homocysteine + H(+). It functions in the pathway aromatic compound metabolism. Its pathway is alkaloid biosynthesis. In terms of biological role, O-methyltransferase participating in the biosynthesis of natural products derived from phenylethylamine, including mescaline, a natural hallucinogen potentially used in psychotherapeutic treatments. Catalyzes the O-methylation of mescaline para hydroxyl groups, using dopamine, 3,4-dihydroxy-5-methoxyphenethylamine, 3-hydroxy-4,5-dimethoxyphenethylamine and 4-hydroxy-3,5-dimethoxyphenethylamine as substrates. The sequence is that of O-methyltransferase 10 from Lophophora williamsii (Peyote).